The sequence spans 440 residues: Glutamate-1-semialdehyde 2,1-aminomutase (440 aa).

Position 271 is an N6-(pyridoxal phosphate)lysine (Lys271).

Belongs to the class-III pyridoxal-phosphate-dependent aminotransferase family. HemL subfamily. In terms of assembly, homodimer. It depends on pyridoxal 5'-phosphate as a cofactor.

It is found in the cytoplasm. It catalyses the reaction (S)-4-amino-5-oxopentanoate = 5-aminolevulinate. The protein operates within porphyrin-containing compound metabolism; protoporphyrin-IX biosynthesis; 5-aminolevulinate from L-glutamyl-tRNA(Glu): step 2/2. This Chlamydia pneumoniae (Chlamydophila pneumoniae) protein is Glutamate-1-semialdehyde 2,1-aminomutase.